The chain runs to 311 residues: Acetaldehyde dehydrogenase 1 (311 aa).

Position 11–14 (Ser-11–Ile-14) interacts with NAD(+). The active-site Acyl-thioester intermediate is the Cys-129. Residues Ser-161 to Asn-169 and Asn-288 contribute to the NAD(+) site.

Belongs to the acetaldehyde dehydrogenase family.

It catalyses the reaction acetaldehyde + NAD(+) + CoA = acetyl-CoA + NADH + H(+). This Novosphingobium aromaticivorans (strain ATCC 700278 / DSM 12444 / CCUG 56034 / CIP 105152 / NBRC 16084 / F199) protein is Acetaldehyde dehydrogenase 1.